The following is a 282-amino-acid chain: Probable septum site-determining protein MinC (282 aa).

The segment at 108–127 (AAARSADEESANAAAAAPAA) is disordered. The segment covering 118–127 (ANAAAAAPAA) has biased composition (low complexity).

It belongs to the MinC family. In terms of assembly, interacts with MinD and FtsZ.

Functionally, cell division inhibitor that blocks the formation of polar Z ring septums. Rapidly oscillates between the poles of the cell to destabilize FtsZ filaments that have formed before they mature into polar Z rings. Prevents FtsZ polymerization. The polypeptide is Probable septum site-determining protein MinC (Paraburkholderia xenovorans (strain LB400)).